The following is a 160-amino-acid chain: Succinate dehydrogenase assembly factor 2-B, mitochondrial (160 aa).

The N-terminal 23 residues, methionine 1–alanine 23, are a transit peptide targeting the mitochondrion.

This sequence belongs to the SDHAF2 family. Interacts with the flavoprotein subunit within the SDH catalytic dimer.

It is found in the mitochondrion matrix. Functionally, plays an essential role in the assembly of succinate dehydrogenase (SDH), an enzyme complex (also referred to as respiratory complex II) that is a component of both the tricarboxylic acid (TCA) cycle and the mitochondrial electron transport chain, and which couples the oxidation of succinate to fumarate with the reduction of ubiquinone (coenzyme Q) to ubiquinol. Required for flavinylation (covalent attachment of FAD) of the flavoprotein subunit of the SDH catalytic dimer. The sequence is that of Succinate dehydrogenase assembly factor 2-B, mitochondrial from Drosophila pseudoobscura pseudoobscura (Fruit fly).